The following is a 551-amino-acid chain: Arginine--tRNA ligase (551 aa).

Residues Ala123–Arg133 carry the 'HIGH' region motif.

It belongs to the class-I aminoacyl-tRNA synthetase family. As to quaternary structure, monomer.

Its subcellular location is the cytoplasm. It carries out the reaction tRNA(Arg) + L-arginine + ATP = L-arginyl-tRNA(Arg) + AMP + diphosphate. The protein is Arginine--tRNA ligase of Chlorobaculum tepidum (strain ATCC 49652 / DSM 12025 / NBRC 103806 / TLS) (Chlorobium tepidum).